The following is a 90-amino-acid chain: Probable Fe(2+)-trafficking protein (90 aa).

This sequence belongs to the Fe(2+)-trafficking protein family.

In terms of biological role, could be a mediator in iron transactions between iron acquisition and iron-requiring processes, such as synthesis and/or repair of Fe-S clusters in biosynthetic enzymes. This is Probable Fe(2+)-trafficking protein from Coxiella burnetii (strain CbuK_Q154) (Coxiella burnetii (strain Q154)).